A 387-amino-acid polypeptide reads, in one-letter code: Mannose-6-phosphate isomerase (387 aa).

This sequence belongs to the N-acylglucosamine 2-epimerase family.

The enzyme catalyses D-mannose 6-phosphate = D-fructose 6-phosphate. The polypeptide is Mannose-6-phosphate isomerase (pmi) (Rhizobium meliloti (strain 1021) (Ensifer meliloti)).